The chain runs to 287 residues: Probable F-box protein At5g04010 (287 aa).

An F-box; degenerate domain is found at 50–101; that stretch reads PSPPSWEILCLVGPYMDPESLAVASCVSTTWSKCFSSEDLWKSLPATRHSIF.

This chain is Probable F-box protein At5g04010 (NSFBx), found in Arabidopsis thaliana (Mouse-ear cress).